We begin with the raw amino-acid sequence, 291 residues long: Taste receptor type 2 member 16 (291 aa).

Residue methionine 1 is a topological domain, extracellular. A helical membrane pass occupies residues 2-22 (IPIQLTVFFMIIYVLESLTII). At 23–41 (VQSSLIVAVLGREWLQVRR) the chain is on the cytoplasmic side. The chain crosses the membrane as a helical span at residues 42-62 (LMPVDMILISLGISRFCLQWA). Residues 63 to 84 (SMLNNFCSYFNLNYVLCNLTIT) are Extracellular-facing. N-linked (GlcNAc...) asparagine glycosylation occurs at asparagine 80. Residues 85–105 (WEFFNILTFWLNSLLTVFYCI) form a helical membrane-spanning segment. Over 106 to 125 (KVSSFTHHIFLWLRWRILRL) the chain is Cytoplasmic. Residues 126–146 (FPWILLGSLMITCVTIIPSAI) traverse the membrane as a helical segment. The Extracellular portion of the chain corresponds to 147 to 182 (GNYIQIQLLTMEHLPRNSTVTDKLENFHQYQFQAHT). An N-linked (GlcNAc...) asparagine glycan is attached at asparagine 163. A helical transmembrane segment spans residues 183-203 (VALVIPFILFLASTIFLMASL). The Cytoplasmic portion of the chain corresponds to 204–228 (TKQIQHHSTGHCNPSMKARFTALRS). Residues 229-249 (LAVLFIVFTSYFLTILITIIG) form a helical membrane-spanning segment. Over 250–257 (TLFDKRCW) the chain is Extracellular. A helical transmembrane segment spans residues 258–278 (LWVWEAFVYAFILMHSTSLML). The Cytoplasmic segment spans residues 279 to 291 (SSPTLKRILKGKC).

Belongs to the G-protein coupled receptor T2R family. In terms of assembly, interacts with RTP3 and RTP4. As to expression, expressed in a subset of gustducin-positive taste receptor cells of the tongue. Expressed in circumvallate papillae and testis.

The protein localises to the cell membrane. In terms of biological role, gustducin-coupled receptor implicated in the perception of bitter compounds in the oral cavity and the gastrointestinal tract. Signals through PLCB2 and the calcium-regulated cation channel TRPM5. The chain is Taste receptor type 2 member 16 (TAS2R16) from Homo sapiens (Human).